The chain runs to 388 residues: Chorismate synthase (388 aa).

Arginine 39 and arginine 45 together coordinate NADP(+). FMN contacts are provided by residues 130–132 (RSS), 251–252 (NA), glycine 296, 311–315 (KPIPT), and arginine 337.

It belongs to the chorismate synthase family. Homotetramer. FMNH2 serves as cofactor.

It carries out the reaction 5-O-(1-carboxyvinyl)-3-phosphoshikimate = chorismate + phosphate. Its pathway is metabolic intermediate biosynthesis; chorismate biosynthesis; chorismate from D-erythrose 4-phosphate and phosphoenolpyruvate: step 7/7. Catalyzes the anti-1,4-elimination of the C-3 phosphate and the C-6 proR hydrogen from 5-enolpyruvylshikimate-3-phosphate (EPSP) to yield chorismate, which is the branch point compound that serves as the starting substrate for the three terminal pathways of aromatic amino acid biosynthesis. This reaction introduces a second double bond into the aromatic ring system. In Streptococcus pyogenes serotype M49 (strain NZ131), this protein is Chorismate synthase.